The sequence spans 583 residues: Trehalase (583 aa).

The signal sequence occupies residues methionine 1–alanine 23. Residue asparagine 78 is glycosylated (N-linked (GlcNAc...) asparagine). Residues arginine 168, tryptophan 175–aspartate 176, asparagine 212, and arginine 221–glutamine 223 contribute to the substrate site. Residues asparagine 239 and asparagine 261 are each glycosylated (N-linked (GlcNAc...) asparagine). Substrate-binding positions include arginine 286 to glutamate 288 and glycine 319. The Proton donor/acceptor role is filled by aspartate 321. A glycan (N-linked (GlcNAc...) asparagine) is linked at asparagine 369. Glutamate 514 functions as the Proton donor/acceptor in the catalytic mechanism. Glutamate 529 contributes to the substrate binding site. Serine 556 carries GPI-anchor amidated serine lipidation. A propeptide spans glycine 557–tryptophan 583 (removed in mature form).

It belongs to the glycosyl hydrolase 37 family. In terms of assembly, homodimer; disulfide-linked. In terms of tissue distribution, expressed in kidney, liver and small intestine. Also more weakly expressed in pancreas.

It is found in the cell membrane. It carries out the reaction alpha,alpha-trehalose + H2O = alpha-D-glucose + beta-D-glucose. Functionally, intestinal trehalase is probably involved in the hydrolysis of ingested trehalose. The sequence is that of Trehalase from Homo sapiens (Human).